The chain runs to 893 residues: AP-4 complex accessory subunit RUSC1 (893 aa).

4 disordered regions span residues 31 to 223 (ELRE…GKAE), 237 to 332 (EKTE…KDRS), 339 to 358 (SPDT…APPR), and 366 to 444 (LRSR…RAHA). Polar residues predominate over residues 77 to 87 (HGSSIENQQDP). 2 stretches are compositionally biased toward low complexity: residues 95–117 (SPSD…DESP) and 149–165 (PSTC…DSCS). Residues 177 to 187 (SNCNALTTCQD) show a composition bias toward polar residues. Basic and acidic residues predominate over residues 237–257 (EKTEAGWKTIEDSDSGRKTDE). Composition is skewed to pro residues over residues 373–382 (QPPPVPPRDP) and 390–399 (PPRPPPPPVP). The tract at residues 463 to 598 (MAEAQSGTGQ…FHAFILGLLN (136 aa)) is interaction with TRAF6. One can recognise an RUN domain in the interval 515 to 659 (DVGHLVLTTL…LTFHLDLLFE (145 aa)). An interaction with IKBKG region spans residues 599 to 665 (TKQLELWFSS…LLFEHHHHLP (67 aa)). Disordered stretches follow at residues 700–721 (RGTS…PAGS) and 751–772 (HGTT…TPGR). Low complexity-rich tracts occupy residues 702–714 (TSGE…STPS) and 754–770 (TAEA…QTTP). One can recognise an SH3 domain in the interval 835–893 (QADRAVRALCDHTAAGPDQLSFQRGELLRVIATVDEDWLRCGRDGVEGLVPVGYTSLVL).

Associated component of the adapter-like complex 4 (AP-4). Interacts with IKBKG and TRAF6. Interacts with F-actin, acetylated actin, TUBB3, STX1A, KIF5B and KLC1. Post-translationally, phosphorylated on serine residues following nuclear translocation. In terms of processing, polyubiquitinated; polyubiquitination involves TRAF6. Expressed in brain, brain stem and spinal cord (at protein level).

The protein localises to the cytoplasm. Its subcellular location is the nucleus. The protein resides in the cytoskeleton. It localises to the cytoplasmic vesicle. It is found in the early endosome. The protein localises to the postsynaptic density. Its subcellular location is the golgi apparatus. In terms of biological role, associates with the adapter-like complex 4 (AP-4) and may therefore play a role in vesicular trafficking of proteins at the trans-Golgi network. Signaling adapter which plays a role in neuronal differentiation. Involved in regulation of NGF-dependent neurite outgrowth. May play a role in neuronal vesicular trafficking, specifically involving pre-synaptic membrane proteins. Seems to be involved in signaling pathways that are regulated by the prolonged activation of MAPK. Can regulate the polyubiquitination of IKBKG and thus may be involved in regulation of the NF-kappa-B pathway. This chain is AP-4 complex accessory subunit RUSC1, found in Mus musculus (Mouse).